The sequence spans 161 residues: ATP synthase subunit b 1 (161 aa).

The helical transmembrane segment at 5–25 (EFWVAVAFVIFCGIVWKAGGF) threads the bilayer.

This sequence belongs to the ATPase B chain family. In terms of assembly, F-type ATPases have 2 components, F(1) - the catalytic core - and F(0) - the membrane proton channel. F(1) has five subunits: alpha(3), beta(3), gamma(1), delta(1), epsilon(1). F(0) has three main subunits: a(1), b(2) and c(10-14). The alpha and beta chains form an alternating ring which encloses part of the gamma chain. F(1) is attached to F(0) by a central stalk formed by the gamma and epsilon chains, while a peripheral stalk is formed by the delta and b chains.

Its subcellular location is the cell inner membrane. F(1)F(0) ATP synthase produces ATP from ADP in the presence of a proton or sodium gradient. F-type ATPases consist of two structural domains, F(1) containing the extramembraneous catalytic core and F(0) containing the membrane proton channel, linked together by a central stalk and a peripheral stalk. During catalysis, ATP synthesis in the catalytic domain of F(1) is coupled via a rotary mechanism of the central stalk subunits to proton translocation. In terms of biological role, component of the F(0) channel, it forms part of the peripheral stalk, linking F(1) to F(0). The chain is ATP synthase subunit b 1 from Methylobacterium sp. (strain 4-46).